Consider the following 89-residue polypeptide: Small ribosomal subunit protein uS15 (89 aa).

The protein belongs to the universal ribosomal protein uS15 family. Part of the 30S ribosomal subunit. Forms a bridge to the 50S subunit in the 70S ribosome, contacting the 23S rRNA.

One of the primary rRNA binding proteins, it binds directly to 16S rRNA where it helps nucleate assembly of the platform of the 30S subunit by binding and bridging several RNA helices of the 16S rRNA. Its function is as follows. Forms an intersubunit bridge (bridge B4) with the 23S rRNA of the 50S subunit in the ribosome. This Mycobacteroides abscessus (strain ATCC 19977 / DSM 44196 / CCUG 20993 / CIP 104536 / JCM 13569 / NCTC 13031 / TMC 1543 / L948) (Mycobacterium abscessus) protein is Small ribosomal subunit protein uS15.